Reading from the N-terminus, the 270-residue chain is Type III pantothenate kinase (270 aa).

16 to 23 (EIGNTTAM) contacts ATP. Substrate-binding positions include Y106 and 113 to 116 (GADR). The active-site Proton acceptor is the D115. D136 contributes to the K(+) binding site. T139 contacts ATP. T191 lines the substrate pocket.

The protein belongs to the type III pantothenate kinase family. Homodimer. NH4(+) serves as cofactor. K(+) is required as a cofactor.

The protein localises to the cytoplasm. It catalyses the reaction (R)-pantothenate + ATP = (R)-4'-phosphopantothenate + ADP + H(+). The protein operates within cofactor biosynthesis; coenzyme A biosynthesis; CoA from (R)-pantothenate: step 1/5. Functionally, catalyzes the phosphorylation of pantothenate (Pan), the first step in CoA biosynthesis. The chain is Type III pantothenate kinase from Chlorobium luteolum (strain DSM 273 / BCRC 81028 / 2530) (Pelodictyon luteolum).